The primary structure comprises 506 residues: Heat stress transcription factor A-1 (506 aa).

Positions 157–207 (MEEEIEMLKRDKNVLMQELVRLRQQQQTTDHQLQTLGKRLQGMEQRQQQMM) form a coiled coil. Residues 164–214 (LKRDKNVLMQELVRLRQQQQTTDHQLQTLGKRLQGMEQRQQQMMSFLAKAM) are hydrophobic repeat HR-A/B. The interval 231–254 (RRRIVASNKKRRLPKQDGSLDSES) is disordered. The segment covering 232–243 (RRIVASNKKRRL) has biased composition (basic residues). Residues 239 to 242 (KKRR) carry the Nuclear localization signal motif. Positions 449–456 (DSFWEQFL) match the AHA motif.

It belongs to the HSF family. Class A subfamily. Homotrimer. Post-translationally, exhibits temperature-dependent phosphorylation.

The protein resides in the nucleus. Its function is as follows. Transcriptional regulator that specifically binds DNA of heat shock promoter elements (HSE). The polypeptide is Heat stress transcription factor A-1 (HSFA1) (Oryza sativa subsp. japonica (Rice)).